Consider the following 27-residue polypeptide: Protein YqfI (27 aa).

The chain is Protein YqfI from Escherichia coli (strain K12).